The primary structure comprises 1775 residues: ATP-dependent RNA helicase DEAH12, chloroplastic (1775 aa).

The N-terminal 33 residues, 1-33, are a transit peptide targeting the chloroplast; the sequence is MRNSFPPSDGGRSATDRRQQSSHSSSTNRYNSR. The tract at residues 1–77 is disordered; that stretch reads MRNSFPPSDG…NPSSGYSPPV (77 aa). Low complexity predominate over residues 21–34; sequence SSHSSSTNRYNSRS. Over residues 35 to 60 the composition is skewed to polar residues; sequence AQSSPPLNHRPTWNQQHSQYPNSNFP. In terms of domain architecture, Helicase ATP-binding spans 316–480; sequence LKKIHREQIM…FFSCGILLVN (165 aa). 329–336 contacts ATP; the sequence is GETGSGKS. The short motif at 427–430 is the DEAH box element; it reads DEAH. The 167-residue stretch at 510-676 folds into the Helicase C-terminal domain; it reads DVVKMAVEIH…VALLRMLALG (167 aa). The segment at 1560–1767 is TRIAD supradomain; it reads IEVECPICLS…EPCYAHLRTI (208 aa). Residues C1564, C1567, C1580, H1582, C1585, C1588, C1607, C1612, C1652, C1657, C1675, C1678, C1683, C1686, H1691, C1696, C1722, and C1725 each coordinate Zn(2+). An RING-type 1 zinc finger spans residues 1564-1612; sequence CPICLSEVDDGYSLEGCSHLFCKACLLEQFEASMRNFDAFPILCSHIDC. The segment at 1631–1696 adopts an IBR-type zinc-finger fold; sequence DELFSASLSS…HLEYHPLITC (66 aa). The RING-type 2; atypical zinc finger occupies 1722–1750; the sequence is CPICKSTIEKTDGCNHMKCRCGKHICWTC. C1735 is a catalytic residue. Residues C1740 and C1742 each contribute to the Zn(2+) site.

The protein belongs to the DEAD box helicase family. DEAH subfamily.

It localises to the plastid. It is found in the chloroplast. It carries out the reaction ATP + H2O = ADP + phosphate + H(+). The polypeptide is ATP-dependent RNA helicase DEAH12, chloroplastic (Arabidopsis thaliana (Mouse-ear cress)).